The primary structure comprises 120 residues: uncharacterized protein (120 aa).

To phage T4 y06Q.

This is an uncharacterized protein from Escherichia coli (strain K12).